We begin with the raw amino-acid sequence, 118 residues long: Large ribosomal subunit protein bL20 (118 aa).

The protein belongs to the bacterial ribosomal protein bL20 family.

Its function is as follows. Binds directly to 23S ribosomal RNA and is necessary for the in vitro assembly process of the 50S ribosomal subunit. It is not involved in the protein synthesizing functions of that subunit. The chain is Large ribosomal subunit protein bL20 from Alteromonas mediterranea (strain DSM 17117 / CIP 110805 / LMG 28347 / Deep ecotype).